The chain runs to 83 residues: MKASMFLALAGSVLLFVVGYASESEEKEFPIELLSKIFAVDVFKGEERGCKGFGDSCTPGKNECCPNHACSNKHKWCKVYLGK.

A signal peptide spans 1-21; that stretch reads MKASMFLALAGSVLLFVVGYA. Positions 22–48 are excised as a propeptide; the sequence is SESEEKEFPIELLSKIFAVDVFKGEER. 3 disulfides stabilise this stretch: Cys-50-Cys-65, Cys-57-Cys-70, and Cys-64-Cys-77. The residue at position 81 (Leu-81) is a Leucine amide.

This sequence belongs to the neurotoxin 10 (Hwtx-1) family. 15 (Hntx-3) subfamily. Monomer. Expressed by the venom gland.

It localises to the secreted. Functionally, lethal neurotoxin. Selectively blocks tetrodotoxin-sensitive voltage-gated sodium channels (Nav). Does not affect tetrodotoxin-resistant voltage-gated sodium channels or calcium channels. The protein is Mu-theraphotoxin-Hhn2j 4 of Cyriopagopus hainanus (Chinese bird spider).